Consider the following 366-residue polypeptide: UDP-N-acetylglucosamine--N-acetylmuramyl-(pentapeptide) pyrophosphoryl-undecaprenol N-acetylglucosamine transferase (366 aa).

Residues threonine 14–glycine 16, asparagine 125, arginine 168, serine 196, and glutamine 297 contribute to the UDP-N-acetyl-alpha-D-glucosamine site.

This sequence belongs to the glycosyltransferase 28 family. MurG subfamily.

It localises to the cell inner membrane. The enzyme catalyses di-trans,octa-cis-undecaprenyl diphospho-N-acetyl-alpha-D-muramoyl-L-alanyl-D-glutamyl-meso-2,6-diaminopimeloyl-D-alanyl-D-alanine + UDP-N-acetyl-alpha-D-glucosamine = di-trans,octa-cis-undecaprenyl diphospho-[N-acetyl-alpha-D-glucosaminyl-(1-&gt;4)]-N-acetyl-alpha-D-muramoyl-L-alanyl-D-glutamyl-meso-2,6-diaminopimeloyl-D-alanyl-D-alanine + UDP + H(+). It participates in cell wall biogenesis; peptidoglycan biosynthesis. Its function is as follows. Cell wall formation. Catalyzes the transfer of a GlcNAc subunit on undecaprenyl-pyrophosphoryl-MurNAc-pentapeptide (lipid intermediate I) to form undecaprenyl-pyrophosphoryl-MurNAc-(pentapeptide)GlcNAc (lipid intermediate II). This chain is UDP-N-acetylglucosamine--N-acetylmuramyl-(pentapeptide) pyrophosphoryl-undecaprenol N-acetylglucosamine transferase, found in Rhodopseudomonas palustris (strain ATCC BAA-98 / CGA009).